We begin with the raw amino-acid sequence, 181 residues long: Inner membrane-spanning protein YciB (181 aa).

Transmembrane regions (helical) follow at residues 22–42, 50–70, 80–100, 118–138, and 148–168; these read IYTA…LTYV, MQLI…FLHD, IVYA…RPII, INYA…YVAF, and FKVF…GMYV.

It belongs to the YciB family.

Its subcellular location is the cell inner membrane. Its function is as follows. Plays a role in cell envelope biogenesis, maintenance of cell envelope integrity and membrane homeostasis. In Aliivibrio salmonicida (strain LFI1238) (Vibrio salmonicida (strain LFI1238)), this protein is Inner membrane-spanning protein YciB.